A 561-amino-acid polypeptide reads, in one-letter code: DNA ligase B (561 aa).

Lys125 acts as the N6-AMP-lysine intermediate in catalysis.

It belongs to the NAD-dependent DNA ligase family. LigB subfamily.

It catalyses the reaction NAD(+) + (deoxyribonucleotide)n-3'-hydroxyl + 5'-phospho-(deoxyribonucleotide)m = (deoxyribonucleotide)n+m + AMP + beta-nicotinamide D-nucleotide.. In terms of biological role, catalyzes the formation of phosphodiester linkages between 5'-phosphoryl and 3'-hydroxyl groups in double-stranded DNA using NAD as a coenzyme and as the energy source for the reaction. The chain is DNA ligase B from Salmonella heidelberg (strain SL476).